Here is a 169-residue protein sequence, read N- to C-terminus: Large ribosomal subunit protein uL10 (169 aa).

This sequence belongs to the universal ribosomal protein uL10 family. As to quaternary structure, part of the ribosomal stalk of the 50S ribosomal subunit. The N-terminus interacts with L11 and the large rRNA to form the base of the stalk. The C-terminus forms an elongated spine to which L12 dimers bind in a sequential fashion forming a multimeric L10(L12)X complex.

In terms of biological role, forms part of the ribosomal stalk, playing a central role in the interaction of the ribosome with GTP-bound translation factors. The protein is Large ribosomal subunit protein uL10 of Orientia tsutsugamushi (strain Boryong) (Rickettsia tsutsugamushi).